The following is a 250-amino-acid chain: Pyrroloquinoline-quinone synthase (250 aa).

This sequence belongs to the PqqC family.

It carries out the reaction 6-(2-amino-2-carboxyethyl)-7,8-dioxo-1,2,3,4,7,8-hexahydroquinoline-2,4-dicarboxylate + 3 O2 = pyrroloquinoline quinone + 2 H2O2 + 2 H2O + H(+). The protein operates within cofactor biosynthesis; pyrroloquinoline quinone biosynthesis. Ring cyclization and eight-electron oxidation of 3a-(2-amino-2-carboxyethyl)-4,5-dioxo-4,5,6,7,8,9-hexahydroquinoline-7,9-dicarboxylic-acid to PQQ. This chain is Pyrroloquinoline-quinone synthase, found in Xanthomonas campestris pv. campestris (strain 8004).